Reading from the N-terminus, the 273-residue chain is Bis(5'-nucleosyl)-tetraphosphatase, symmetrical (273 aa).

It belongs to the Ap4A hydrolase family.

The enzyme catalyses P(1),P(4)-bis(5'-adenosyl) tetraphosphate + H2O = 2 ADP + 2 H(+). Hydrolyzes diadenosine 5',5'''-P1,P4-tetraphosphate to yield ADP. In Aliivibrio salmonicida (strain LFI1238) (Vibrio salmonicida (strain LFI1238)), this protein is Bis(5'-nucleosyl)-tetraphosphatase, symmetrical.